Consider the following 104-residue polypeptide: Integration host factor subunit beta (104 aa).

This sequence belongs to the bacterial histone-like protein family. In terms of assembly, heterodimer of an alpha and a beta chain.

Its function is as follows. This protein is one of the two subunits of integration host factor, a specific DNA-binding protein that functions in genetic recombination as well as in transcriptional and translational control. The protein is Integration host factor subunit beta of Chromobacterium violaceum (strain ATCC 12472 / DSM 30191 / JCM 1249 / CCUG 213 / NBRC 12614 / NCIMB 9131 / NCTC 9757 / MK).